The following is a 1030-amino-acid chain: E3 ubiquitin-protein ligase mib1 (1030 aa).

Residues N6–A74 enclose the MIB/HERC2 1 domain. The ZZ-type zinc finger occupies H80–S132. Zn(2+)-binding residues include C85, C88, C100, C103, C109, C112, H118, and H122. The 79-residue stretch at S143–A221 folds into the MIB/HERC2 2 domain. ANK repeat units follow at residues D430–G460, A463–A492, D496–A525, R529–L558, E562–I591, N595–E627, D631–V661, N665–V694, and D698–V727. 2 RING-type zinc fingers span residues C817–K852 and C864–R899. Positions A957–M986 form a coiled coil. The RING-type 3 zinc finger occupies C987 to R1020.

Interacts with deltaA (dla) and deltaD (dld).

It is found in the cytoplasm. It localises to the cytoskeleton. The protein localises to the microtubule organizing center. Its subcellular location is the centrosome. The protein resides in the centriolar satellite. It is found in the cell membrane. It catalyses the reaction S-ubiquitinyl-[E2 ubiquitin-conjugating enzyme]-L-cysteine + [acceptor protein]-L-lysine = [E2 ubiquitin-conjugating enzyme]-L-cysteine + N(6)-ubiquitinyl-[acceptor protein]-L-lysine.. Its pathway is protein modification; protein ubiquitination. Its function is as follows. E3 ubiquitin-protein ligase that mediates ubiquitination of Delta receptors, which act as ligands of Notch proteins. Positively regulates the Delta-mediated Notch signaling by ubiquitinating the intracellular domain of Delta, leading to endocytosis of Delta receptors. It thereby participates in many processes regulated by the Notch signaling pathway, such as midline cell fate specification prior to germ layer formation, patterning of sensory cell differentiation in the ear, neurogenesis of the hindbrain and commitment to a secretory fate in the intestine. Essential for early embryonic development. The sequence is that of E3 ubiquitin-protein ligase mib1 (mib1) from Danio rerio (Zebrafish).